A 326-amino-acid chain; its full sequence is tRNA-modifying protein YgfZ (326 aa).

Residues Trp27 and Trp189 each contribute to the folate site.

It belongs to the tRNA-modifying YgfZ family.

Its subcellular location is the cytoplasm. Its function is as follows. Folate-binding protein involved in regulating the level of ATP-DnaA and in the modification of some tRNAs. It is probably a key factor in regulatory networks that act via tRNA modification, such as initiation of chromosomal replication. This chain is tRNA-modifying protein YgfZ, found in Escherichia coli O45:K1 (strain S88 / ExPEC).